Reading from the N-terminus, the 502-residue chain is MGKVAVATTVVCSVAVCAAAALIVRRRMKSAGKWARVIEILKAFEEDCATPIAKLRQVADAMTVEMHAGLASEGGSKLKMLISYVDNLPSGDETGFFYALDLGGTNFRVMRVLLGGKHDRVVKREFKEESIPPHLMTGKSHELFDFIVDVLAKFVATEGEDFHLPPGRQRELGFTFSFPVKQLSLSSGTLINWTKGFSIDDTVDKDVVGELVKAMERVGLDMLVAALVNDTIGTLAGGRYTNPDVVVAVILGTGTNAAYVERAHAIPKWHGLLPKSGEMVINMEWGNFRSSHLPLTEYDHSLDVDSLNPGEQILEKIISGMYLGEILRRVLLKMAEEAAFFGDIVPPKLKIPFIIRTPNMSAMHSDTSPDLKVVGSKLKDILEVQTSSLKMRKVVISLCNIIASRGARLSAAGIYGILKKIGRDATKDGEAQKSVIAMDGGLFEHYTQFSESMKSSLKELLGDEVSESVEVILSNDGSGVGAALLAASHSQYLELEDDSETS.

The chain crosses the membrane as a helical span at residues 4-24 (VAVATTVVCSVAVCAAAALIV). Residues 35-487 (ARVIEILKAF…SGVGAALLAA (453 aa)) form the Hexokinase domain. The hexokinase small subdomain stretch occupies residues 90–228 (SGDETGFFYA…GLDMLVAALV (139 aa)). Residues Gly-104, Thr-105, and Asn-106 each contribute to the ADP site. Positions 194, 195, 229, and 230 each coordinate D-glucose. Residues 229-476 (NDTIGTLAGG…ESVEVILSND (248 aa)) are hexokinase large subdomain. Thr-253 provides a ligand contact to ADP. 3 residues coordinate D-glucose: Asn-256, Glu-284, and Glu-315. Gly-441 contributes to the ADP binding site.

The protein belongs to the hexokinase family. Highly expressed in siliques, at intermediate levels in roots and flowers, and at lower levels in stems, rosette and cauline leaves.

Its subcellular location is the mitochondrion outer membrane. It catalyses the reaction a D-hexose + ATP = a D-hexose 6-phosphate + ADP + H(+). The catalysed reaction is D-fructose + ATP = D-fructose 6-phosphate + ADP + H(+). The enzyme catalyses D-glucose + ATP = D-glucose 6-phosphate + ADP + H(+). The protein operates within carbohydrate metabolism; hexose metabolism. It participates in carbohydrate degradation; glycolysis; D-glyceraldehyde 3-phosphate and glycerone phosphate from D-glucose: step 1/4. Fructose and glucose phosphorylating enzyme. May be involved in the phosphorylation of glucose during the export from mitochondrion to cytosol. Acts as a sugar sensor which may regulate sugar-dependent gene repression or activation. Mediates the effects of sugar on plant growth and development independently of its catalytic activity or the sugar metabolism. May regulate the execution of program cell death in plant cells. This is Hexokinase-2 (HXK2) from Arabidopsis thaliana (Mouse-ear cress).